The following is a 474-amino-acid chain: MKLSMPRFDQAPVLVVGDVMLDRYWHGATSRISPEAPVPVVRVEQHEDRPGGAANVALNIAALGAQALLVGVTGRDEAADSLANSLKAAGVDARFQRIDSQPTIVKLRVMSRHQQLLRVDFEEPFRTDAAALAVDVESLLAKVKVLVLSDYGKGALQNHQVLIQAARARNIPVLADPKGKDFAIYRGASLITPNLSEFETIVGRCADEAELVAKGQELMSELDLGALLVTRGEHGMTLLRHGQPALHLPARAREVFDVTGAGDTVISTLAAALAAGEELPSAVGLANLAAGIVVGKLGTAAISAPELRRAVQREQGSERGVLGLEQLLLAIEDARAHGEKIVFTNGCFDILHAGHVTYLEQARAQGDRLIVGVNDDASVTRLKGVGRPINSVDRRMAVLAGLGAVDWVVSFAEDTPERLLEQVRPDVLVKGGDYGVEQVVGAQIVKAYGGEVRVLGLVENSSTTAIVEKIRQKG.

A ribokinase region spans residues M1–E318. N194–E197 is an ATP binding site. Residue D263 is part of the active site. The segment at F343–G474 is cytidylyltransferase.

This sequence in the N-terminal section; belongs to the carbohydrate kinase PfkB family. The protein in the C-terminal section; belongs to the cytidylyltransferase family. Homodimer.

It catalyses the reaction D-glycero-beta-D-manno-heptose 7-phosphate + ATP = D-glycero-beta-D-manno-heptose 1,7-bisphosphate + ADP + H(+). The catalysed reaction is D-glycero-beta-D-manno-heptose 1-phosphate + ATP + H(+) = ADP-D-glycero-beta-D-manno-heptose + diphosphate. Its pathway is nucleotide-sugar biosynthesis; ADP-L-glycero-beta-D-manno-heptose biosynthesis; ADP-L-glycero-beta-D-manno-heptose from D-glycero-beta-D-manno-heptose 7-phosphate: step 1/4. It functions in the pathway nucleotide-sugar biosynthesis; ADP-L-glycero-beta-D-manno-heptose biosynthesis; ADP-L-glycero-beta-D-manno-heptose from D-glycero-beta-D-manno-heptose 7-phosphate: step 3/4. In terms of biological role, catalyzes the phosphorylation of D-glycero-D-manno-heptose 7-phosphate at the C-1 position to selectively form D-glycero-beta-D-manno-heptose-1,7-bisphosphate. Functionally, catalyzes the ADP transfer from ATP to D-glycero-beta-D-manno-heptose 1-phosphate, yielding ADP-D-glycero-beta-D-manno-heptose. This Pseudomonas aeruginosa (strain UCBPP-PA14) protein is Bifunctional protein HldE.